Reading from the N-terminus, the 195-residue chain is Probable GTP-binding protein EngB (195 aa).

The 172-residue stretch at 24–195 folds into the EngB-type G domain; that stretch reads ELPEIALAGR…EAWDAILEKL (172 aa). GTP-binding positions include 32 to 39, 59 to 63, 77 to 80, 144 to 147, and 176 to 178; these read GRSNVGKS, GKTQL, DVPG, TKAD, and FSS. Positions 39 and 61 each coordinate Mg(2+).

The protein belongs to the TRAFAC class TrmE-Era-EngA-EngB-Septin-like GTPase superfamily. EngB GTPase family. Mg(2+) serves as cofactor.

Functionally, necessary for normal cell division and for the maintenance of normal septation. This is Probable GTP-binding protein EngB from Streptococcus pneumoniae serotype 4 (strain ATCC BAA-334 / TIGR4).